The chain runs to 321 residues: Serine/threonine-protein phosphatase PP1 isozyme 4 (321 aa).

An N-acetylalanine modification is found at A2. Mn(2+) contacts are provided by D74, H76, D102, and N134. The Proton donor role is filled by H135. H183 and H258 together coordinate Mn(2+).

It belongs to the PPP phosphatase family. PP-1 subfamily. As to quaternary structure, interacts with the DELLA proteins RGA and GAI. Interacts with PIF3 and PIF5. Interacts with the auxin efflux carrier PIN1. Requires Mn(2+) as cofactor. In terms of tissue distribution, expressed in the vasculature of roots and cotyledons, tips of leaves, guard cells, bases of trichomes, pistils and stamen filaments.

It is found in the nucleus. The protein resides in the cytoplasm. It catalyses the reaction O-phospho-L-seryl-[protein] + H2O = L-seryl-[protein] + phosphate. The catalysed reaction is O-phospho-L-threonyl-[protein] + H2O = L-threonyl-[protein] + phosphate. With respect to regulation, phosphatase activity is strongly reduced by the protein phosphatase inhibitor 2 (I-2). Serine/threonine-protein phosphatase that possesses phosphatase activity toward para-nitrophenyl phosphate (pNPP) in vitro. Acts as a positive regulator in the gibberellin (GA) signaling pathway to regulate plant growth and development. Promotes the GA-induced and proteasomal-dependent degradation of the DELLA proteins RGA and GAI by directly binding and dephosphorylating these proteins. Involved in the regulation of phytochrome B (phyB) signaling pathway that controls photomorphogenesis. Promotes the proteasomal-dependent degradation of PIF5 factor by directly binding and dephosphorylating this protein. Involved in the regulation of pavement cell (PC) interdigitation by modulating the auxin efflux carrier PIN1 polarity and endocytic trafficking. Regulates PIN1 polar targeting through direct binding and dephosphorylation. Acts antagonistically with PID in regulating PC development. The protein is Serine/threonine-protein phosphatase PP1 isozyme 4 of Arabidopsis thaliana (Mouse-ear cress).